The sequence spans 301 residues: Diaminopimelate epimerase (301 aa).

The substrate site is built by N15, Q47, and N67. C76 functions as the Proton donor in the catalytic mechanism. Substrate contacts are provided by residues G77–N78, N163, N197, and E215–R216. C224 functions as the Proton acceptor in the catalytic mechanism. G225–S226 provides a ligand contact to substrate.

The protein belongs to the diaminopimelate epimerase family. In terms of assembly, homodimer.

Its subcellular location is the cytoplasm. It catalyses the reaction (2S,6S)-2,6-diaminopimelate = meso-2,6-diaminopimelate. It participates in amino-acid biosynthesis; L-lysine biosynthesis via DAP pathway; DL-2,6-diaminopimelate from LL-2,6-diaminopimelate: step 1/1. In terms of biological role, catalyzes the stereoinversion of LL-2,6-diaminopimelate (L,L-DAP) to meso-diaminopimelate (meso-DAP), a precursor of L-lysine and an essential component of the bacterial peptidoglycan. The sequence is that of Diaminopimelate epimerase from Rhizobium meliloti (strain 1021) (Ensifer meliloti).